The sequence spans 478 residues: Noelin-3 (478 aa).

A signal peptide spans Met1 to Ser23. N-linked (GlcNAc...) asparagine glycosylation is found at Asn33, Asn95, Asn179, Asn299, and Asn465. The stretch at Cys77 to Leu217 forms a coiled coil. Residues Thr218–His470 form the Olfactomedin-like domain. A disulfide bond links Cys219 and Cys401.

In terms of assembly, peripherally associated with AMPAR complex. AMPAR complex consists of an inner core made of 4 pore-forming GluA/GRIA proteins (GRIA1, GRIA2, GRIA3 and GRIA4) and 4 major auxiliary subunits arranged in a twofold symmetry. One of the two pairs of distinct binding sites is occupied either by CNIH2, CNIH3 or CACNG2, CACNG3. The other harbors CACNG2, CACNG3, CACNG4, CACNG8 or GSG1L. This inner core of AMPAR complex is complemented by outer core constituents binding directly to the GluA/GRIA proteins at sites distinct from the interaction sites of the inner core constituents. Outer core constituents include at least PRRT1, PRRT2, CKAMP44/SHISA9, FRRS1L and NRN1. The proteins of the inner and outer core serve as a platform for other, more peripherally associated AMPAR constituents, including OLFM3. Alone or in combination, these auxiliary subunits control the gating and pharmacology of the AMPAR complex and profoundly impact their biogenesis and protein processing. Homodimer. Interacts with MYOC. Interacts with OLFM2. In the eye, expressed in trabecular meshwork and neural retina; in non-ocular tissues, expressed in brain and lung.

The protein localises to the secreted. The protein resides in the synapse. This chain is Noelin-3 (OLFM3), found in Homo sapiens (Human).